A 553-amino-acid polypeptide reads, in one-letter code: Expansin-like protein 7 (553 aa).

Positions 1-19 (MRLLGSLILTLSLIASAFS) are cleaved as a signal peptide. An N-linked (GlcNAc...) asparagine glycan is attached at N39. The 99-residue stretch at 41–139 (SGSCEYGAYN…RKVSCDASGP (99 aa)) folds into the Expansin-like EG45 domain. Disulfide bonds link C44/C73 and C76/C134. N276, N325, and N406 each carry an N-linked (GlcNAc...) asparagine glycan. 2 disordered regions span residues 421 to 447 (GGSG…SSTA) and 460 to 531 (SSSA…DEHH). Low complexity-rich tracts occupy residues 460 to 476 (SSSA…AGGK) and 484 to 493 (ISTSGITGSG). The span at 497–516 (AASTSKTTSNPTGKTTGMTG) shows a compositional bias: polar residues. Residues 520-531 (DHSESHSSDEHH) show a composition bias toward basic and acidic residues.

It belongs to the expansin family. Expansin A subfamily.

It is found in the secreted. Its function is as follows. May serve to lubricate the movement of the cellulose microfibrils during cell growth and wall extension and/or may serve to maintain the fluid state of the slug cell wall. Overexpression shows aberrant stalk formation. This is Expansin-like protein 7 (expl7) from Dictyostelium discoideum (Social amoeba).